The primary structure comprises 494 residues: MDASTLFKKVKVKRVLGSLEQQIDDITTDSRTAREGSIFVASVGYTVDSHKFCQSVADQGCKLVVVNKEQSLPANVTQVVVPDTLRVASILAHTLFDYPSHQLVTFGVTGTNGKTSIATMIHLIQRKLQKNSAYLGTNGFQINETKTKGANTTPETVSLTKKIKEAVDAGAESMTLEVSSHGLVLGRLRGVEFDVAIFSNLTQDHLDFHGTMEAYGHAKSLLFSQLGEDLSKEKYVVLNNDDSFSEYLRTVTPYEVFSYGIDEEAQFMAENIQESLQGVSFDFVTPFGTYPVKSPYVGKFNISNIMAAMIAVWSKGTSLETIIKAVENLEPVEGRLEVLDPSLPIDLIIDYAHTADGMNKLIDAVQPFVKQKLIFLVGMAGERDLTKTPEMGRVACRADYVIFTPDNPANDDPKMLTAELAKGATHQNYIEFDDRAEGIKHAIDIAEPGDTVVLASKGREPYQIMPGHIKVPHRDDLIGLEAAYKKFGGGPVGQ.

Position 30 (Ser30) interacts with UDP-N-acetyl-alpha-D-muramoyl-L-alanyl-D-glutamate. Position 110–116 (110–116) interacts with ATP; that stretch reads GTNGKTS. Residues 152–153, Ser179, and Arg187 contribute to the UDP-N-acetyl-alpha-D-muramoyl-L-alanyl-D-glutamate site; that span reads TT. Residue Lys219 is modified to N6-carboxylysine. Positions 406–409 match the L-lysine recognition motif motif; it reads DNPA.

It belongs to the MurCDEF family. MurE subfamily. In terms of processing, carboxylation is probably crucial for Mg(2+) binding and, consequently, for the gamma-phosphate positioning of ATP.

It is found in the cytoplasm. The catalysed reaction is UDP-N-acetyl-alpha-D-muramoyl-L-alanyl-D-glutamate + L-lysine + ATP = UDP-N-acetyl-alpha-D-muramoyl-L-alanyl-gamma-D-glutamyl-L-lysine + ADP + phosphate + H(+). It participates in cell wall biogenesis; peptidoglycan biosynthesis. Functionally, catalyzes the addition of L-lysine to the nucleotide precursor UDP-N-acetylmuramoyl-L-alanyl-D-glutamate (UMAG) in the biosynthesis of bacterial cell-wall peptidoglycan. The chain is UDP-N-acetylmuramoyl-L-alanyl-D-glutamate--L-lysine ligase from Staphylococcus aureus (strain bovine RF122 / ET3-1).